Here is a 623-residue protein sequence, read N- to C-terminus: Zona pellucida sperm-binding protein 1 (623 aa).

An N-terminal signal peptide occupies residues 1 to 20; it reads MAWGCFVVLLLLAAAPLRLG. Position 21 is a pyrrolidone carboxylic acid (glutamine 21). The Extracellular portion of the chain corresponds to 21-590; the sequence is QRLHLEPGFE…GSSRNSSSRM (570 aa). 2 N-linked (GlcNAc...) asparagine glycosylation sites follow: asparagine 49 and asparagine 68. Residues 182–201 are disordered; it reads IHPTPAPPSLGPGPAGSTVP. The P-type domain maps to 226-266; sequence ERCQVASGHIPCMVNGSSKETCQQAGCCYDSTKEEPCYYGN. 3 disulfide bridges follow: cysteine 228–cysteine 253, cysteine 237–cysteine 252, and cysteine 247–cysteine 262. A glycan (N-linked (GlcNAc...) asparagine) is linked at asparagine 240. Residues 271–542 form the ZP domain; it reads QCFKSGYFTL…DTCSTTCDSG (272 aa). Asparagine 371 is a glycosylation site (N-linked (GlcNAc...) asparagine). An intrachain disulfide couples cysteine 449 to cysteine 470. The propeptide at 547–623 is removed in mature form; that stretch reads RRSSGHHNIT…AQKLWEGIRY (77 aa). N-linked (GlcNAc...) asparagine glycans are attached at residues asparagine 554 and asparagine 585. A helical membrane pass occupies residues 591-611; the sequence is LLLLLAITLALAAGIFVGLIW. Over 612 to 623 the chain is Cytoplasmic; that stretch reads AWAQKLWEGIRY.

The protein belongs to the ZP domain family. ZPB subfamily. In terms of assembly, polymers of ZP2 and ZP3 organized into long filaments cross-linked by ZP1 homodimers. Interacts with ZP3. Post-translationally, proteolytically cleaved before the transmembrane segment to yield the secreted ectodomain incorporated in the zona pellucida. O-glycosylated. As to expression, expressed in oocytes.

Its subcellular location is the zona pellucida. It is found in the cell membrane. Component of the zona pellucida, an extracellular matrix surrounding oocytes which mediates sperm binding, induction of the acrosome reaction and prevents post-fertilization polyspermy. The zona pellucida is composed of 3 to 4 glycoproteins, ZP1, ZP2, ZP3, and ZP4. ZP1 ensures the structural integrity of the zona pellucida. The protein is Zona pellucida sperm-binding protein 1 (Zp1) of Mus musculus (Mouse).